Here is a 74-residue protein sequence, read N- to C-terminus: MRFFATFFLLAMLVVATKMGPMRIAEARHCESLSHRFKGPCTRDSNCASVCETERFSGGNCHGFRRRCFCTKPC.

A signal peptide spans 1 to 19 (MRFFATFFLLAMLVVATKM). 4 disulfide bridges follow: cysteine 30–cysteine 74, cysteine 41–cysteine 61, cysteine 47–cysteine 68, and cysteine 51–cysteine 70.

This sequence belongs to the DEFL family. Protease inhibitor I18 (RTI/MTI-2) subfamily. As to expression, tuber.

It is found in the secreted. This is Defensin-like protein P322 from Solanum tuberosum (Potato).